The sequence spans 327 residues: Glutamyl endopeptidase (327 aa).

A signal peptide spans 1-29 (MKGKFLKVSSLFVATLTTATLVSSPAANA). The propeptide occupies 30–68 (LSSKAMDNHPQQSQSSKQQTPKIQKGGNLKPLEQREHAN). A disordered region spans residues 33–61 (KAMDNHPQQSQSSKQQTPKIQKGGNLKPL). Residues 40-54 (QQSQSSKQQTPKIQK) show a composition bias toward low complexity. Residues H119, D161, and S237 each act as charge relay system in the active site. The tract at residues 283–327 (FANDDQPNNPDNPDNPNNPDNPNNPNNPDNPDNGDNNNSDNPDAA) is disordered. Over residues 286–327 (DDQPNNPDNPDNPNNPDNPNNPNNPDNPDNGDNNNSDNPDAA) the composition is skewed to low complexity. Tandem repeats lie at residues 289-291 (PNN), 292-294 (PDN), 295-297 (PDN), 298-300 (PNN), 301-303 (PDN), 304-306 (PNN), 307-309 (PNN), 310-312 (PDN), and 313-315 (PDN). Residues 289–315 (PNNPDNPDNPNNPDNPNNPNNPDNPDN) are 9 X 3 AA repeats of P-[DN]-N.

Belongs to the peptidase S1B family. Post-translationally, proteolytically cleaved by aureolysin (aur). This cleavage leads to the activation of SspA.

It is found in the secreted. The enzyme catalyses Preferential cleavage: Glu-|-Xaa, Asp-|-Xaa.. In terms of biological role, preferentially cleaves peptide bonds on the carboxyl-terminal side of aspartate and glutamate. Along with other extracellular proteases it is involved in colonization and infection of human tissues. Required for proteolytic maturation of thiol protease SspB and inactivation of SspC, an inhibitor of SspB. It is the most important protease for degradation of fibronectin-binding protein (FnBP) and surface protein A, which are involved in adherence to host cells. May also protect bacteria against host defense mechanism by cleaving the immunoglobulin classes IgG, IgA and IgM. May be involved in the stability of secreted lipases. This is Glutamyl endopeptidase (sspA) from Staphylococcus aureus (strain MW2).